A 577-amino-acid chain; its full sequence is Protein NRT1/ PTR FAMILY 6.2 (577 aa).

Helical transmembrane passes span 28–48 (WITA…TMGI), 74–94 (FMGT…SFLG), 96–116 (FKTI…LAVA), 134–154 (IPAT…IALG), 183–203 (FFFN…VTVL), 214–234 (WAYG…LCGT), 332–352 (LLPI…MITF), 369–389 (IPAG…LAVY), 409–429 (LQRI…AALV), 447–467 (ISVF…AFIY), 488–508 (GLFL…VSIV), and 535–555 (WLLV…ALWF).

This sequence belongs to the major facilitator superfamily. Proton-dependent oligopeptide transporter (POT/PTR) (TC 2.A.17) family. As to expression, expressed in shoots, leaves, flowers and siliques. Expressed in leaf petiole.

It is found in the membrane. Low-affinity proton-dependent nitrate transporter. Not involved in dipeptides transport. In Arabidopsis thaliana (Mouse-ear cress), this protein is Protein NRT1/ PTR FAMILY 6.2 (NPF6.2).